Here is a 159-residue protein sequence, read N- to C-terminus: MGIYSFWIFDRHCNCIFDREWTLASNSASGTINSKQNEEDAKLLYGMIFSLRSITQKLSKGSVKNDIRSISTGKYRVHTYCTASGLWFVLLSDFKQQSYTQVLQYIYSHIYVKYVSNNLLSPYDFAENENEMRGQGTRKITNRNFISVLESFLAPMVNQ.

The protein belongs to the TRAPP small subunits family. BET5 subfamily. In terms of assembly, part of the multisubunit TRAPP (transport protein particle) I complex composed of BET3, BET5, TRS20, TRS23, TRS31 and TRS33. Part of the multisubunit TRAPP (transport protein particle) II complex composed of BET3, BET5, TRS20, TRS23, TRS31, TRS33, TRS65, TRS85, TRS120 and TRS130. Part of the multisubunit TRAPP (transport protein particle) III complex composed of BET3, BET5, TRS20, TRS23, TRS31, TRS33 and TRS85.

The protein localises to the golgi apparatus. It localises to the cis-Golgi network. It is found in the endoplasmic reticulum. The protein resides in the preautophagosomal structure. In terms of biological role, component of the TRAPP I, TRAPP II and TRAPP III complexes which act as guanine nucleotide exchange factors (GEF) for YPT1. TRAPP I plays a key role in the late stages of endoplasmic reticulum to Golgi traffic. TRAPP II plays a role in intra-Golgi transport. TRAPP III plays a role in autophagosome formation. Required for sporulation. Has a role late in meiosis following DNA replication. This chain is Trafficking protein particle complex subunit BET5 (BET5), found in Saccharomyces cerevisiae (strain ATCC 204508 / S288c) (Baker's yeast).